Here is a 380-residue protein sequence, read N- to C-terminus: Cobalt-precorrin-5B C(1)-methyltransferase (380 aa).

The protein belongs to the CbiD family.

It catalyses the reaction Co-precorrin-5B + S-adenosyl-L-methionine = Co-precorrin-6A + S-adenosyl-L-homocysteine. It functions in the pathway cofactor biosynthesis; adenosylcobalamin biosynthesis; cob(II)yrinate a,c-diamide from sirohydrochlorin (anaerobic route): step 6/10. Catalyzes the methylation of C-1 in cobalt-precorrin-5B to form cobalt-precorrin-6A. This is Cobalt-precorrin-5B C(1)-methyltransferase from Methanosphaera stadtmanae (strain ATCC 43021 / DSM 3091 / JCM 11832 / MCB-3).